The primary structure comprises 194 residues: Imidazoleglycerol-phosphate dehydratase (194 aa).

The protein belongs to the imidazoleglycerol-phosphate dehydratase family.

The protein resides in the cytoplasm. The catalysed reaction is D-erythro-1-(imidazol-4-yl)glycerol 3-phosphate = 3-(imidazol-4-yl)-2-oxopropyl phosphate + H2O. It participates in amino-acid biosynthesis; L-histidine biosynthesis; L-histidine from 5-phospho-alpha-D-ribose 1-diphosphate: step 6/9. This chain is Imidazoleglycerol-phosphate dehydratase, found in Methanothermobacter thermautotrophicus (strain ATCC 29096 / DSM 1053 / JCM 10044 / NBRC 100330 / Delta H) (Methanobacterium thermoautotrophicum).